A 158-amino-acid chain; its full sequence is Putative pre-16S rRNA nuclease (158 aa).

It belongs to the YqgF nuclease family.

It localises to the cytoplasm. Could be a nuclease involved in processing of the 5'-end of pre-16S rRNA. This Hahella chejuensis (strain KCTC 2396) protein is Putative pre-16S rRNA nuclease.